Reading from the N-terminus, the 198-residue chain is Recombination protein RecR (198 aa).

The C4-type zinc finger occupies 57 to 72 (CSSCGHITDKDPCYIC). The 96-residue stretch at 80-175 (SIICVVQDPK…KITRIAHGLP (96 aa)) folds into the Toprim domain.

This sequence belongs to the RecR family.

In terms of biological role, may play a role in DNA repair. It seems to be involved in an RecBC-independent recombinational process of DNA repair. It may act with RecF and RecO. The polypeptide is Recombination protein RecR (Anoxybacillus flavithermus (strain DSM 21510 / WK1)).